An 83-amino-acid polypeptide reads, in one-letter code: U5-theraphotoxin-Hs1a 4 (83 aa).

Positions 1–21 are cleaved as a signal peptide; it reads MKTSMFLTLTGLVLLFVDCYA. The propeptide occupies 22 to 49; the sequence is SESEEKEFPKELLSSIFAADSDFKVEER. Disulfide bonds link Cys-51-Cys-63, Cys-56-Cys-68, and Cys-62-Cys-75.

This sequence belongs to the neurotoxin 10 (Hwtx-1) family. 51 (Hntx-8) subfamily. Hntx-8 sub-subfamily. In terms of tissue distribution, expressed by the venom gland.

Its subcellular location is the secreted. In terms of biological role, agglutinates erythrocytes. This Cyriopagopus schmidti (Chinese bird spider) protein is U5-theraphotoxin-Hs1a 4.